We begin with the raw amino-acid sequence, 434 residues long: Protein phosphatase 2C 56 (434 aa).

The 295-residue stretch at 128 to 422 (LYGFTSICGR…DNISVVVVDL (295 aa)) folds into the PPM-type phosphatase domain. Positions 177, 261, 262, 347, and 413 each coordinate Mg(2+). The Nuclear localization signal signature appears at 423–427 (KPRRK).

It belongs to the PP2C family. Interacts with SPK1, ATHB-6, CIPK15/PKS3, GPX3, SRK2E/OST1, SRK2D, SRK2I, SCAR1, SCAR2, SCAR3 and SCARL. Binds to the PA released by the phospholipase D alpha 1 (PLDALPHA1) in response to ABA during the stomatal closure regulation. Interacts with ABA-bounded PYR1, PYL1, PYL2, PYL3, PYL4, PYL5, PYL6, PYL7, PYL8, PYL9, PYL10, and with free PYL2, PYL3, PYL4 and PYL13. Binds to RPL12B, CPK21 and CPK23. Binds to MAPKKK18. Interacts with KIN10. Interacts with phosphorylated PYL8/RCAR3. Requires Mg(2+) as cofactor. It depends on Mn(2+) as a cofactor. Expressed in seeds and seedlings. In roots, confined to lateral root caps and columella cells.

The protein resides in the nucleus. It localises to the cytoplasm. Its subcellular location is the cell membrane. The catalysed reaction is O-phospho-L-seryl-[protein] + H2O = L-seryl-[protein] + phosphate. It carries out the reaction O-phospho-L-threonyl-[protein] + H2O = L-threonyl-[protein] + phosphate. Its activity is regulated as follows. Phosphatase activity repressed by oxidized GPX3 and phosphatidic acid (PA). PA is produced by PLD alpha 1 in response to ABA. Repressed by PYR/PYL/RCAR ABA receptors in an ABA-dependent manner. Its function is as follows. Key component and repressor of the abscisic acid (ABA) signaling pathway that regulates numerous ABA responses, such as stomatal closure, osmotic water permeability of the plasma membrane (Pos), drought-induced resistance and rhizogenesis, response to glucose, high light stress, seed germination and inhibition of vegetative growth. During the stomatal closure regulation, modulates the inward calcium-channel permeability as well as the actin reorganization in guard cells in response to ABA. Involved in the resistance to the bacterial pathogen Pseudomonas syringae pv. tomato. Controls negatively fibrillin expression that is involved in mediating ABA-induced photoprotection. May be involved in ABA content regulation. Plays a role in the Pro accumulation in response to reduced water availability (low water potential). Required for the ABA negative regulation of the ethylene-induced hyponastic growth. Involved in acquired thermotolerance of root growth and seedling survival. Activates/represses SRK2E/OST1 in response to ABA-dependent stimuli, especially in stomata closure regulation involving SLAC1. Represses MAPKKK18 activity and promotes MAPKKK18 degradation by the proteasome pathway upon abscisic acid (ABA) treatment. Represses KIN10 activity by the specific dephosphorylation of its T-loop Thr-198, leading to a poststress inactivation of SnRK1 signaling. Restricts MAPKKK20 activity by dephosphorylation. The polypeptide is Protein phosphatase 2C 56 (Arabidopsis thaliana (Mouse-ear cress)).